Here is a 201-residue protein sequence, read N- to C-terminus: Recombination protein RecR (201 aa).

Residues 57–72 (CKSCRTFTEEDECAIC) form a C4-type zinc finger. The 96-residue stretch at 81–176 (GQLCVVEMPA…KVTRIAHGIP (96 aa)) folds into the Toprim domain.

It belongs to the RecR family.

In terms of biological role, may play a role in DNA repair. It seems to be involved in an RecBC-independent recombinational process of DNA repair. It may act with RecF and RecO. The chain is Recombination protein RecR from Glaesserella parasuis serovar 5 (strain SH0165) (Haemophilus parasuis).